The primary structure comprises 201 residues: Peptide deformylase (201 aa).

The interval 1 to 24 is disordered; the sequence is MANHFSQLAKKSKTNGNSEKIAKE. The Fe cation site is built by Cys121 and His163. Residue Glu164 is part of the active site. His167 serves as a coordination point for Fe cation.

Belongs to the polypeptide deformylase family. The cofactor is Fe(2+).

It carries out the reaction N-terminal N-formyl-L-methionyl-[peptide] + H2O = N-terminal L-methionyl-[peptide] + formate. Removes the formyl group from the N-terminal Met of newly synthesized proteins. Requires at least a dipeptide for an efficient rate of reaction. N-terminal L-methionine is a prerequisite for activity but the enzyme has broad specificity at other positions. The sequence is that of Peptide deformylase from Prochlorococcus marinus (strain MIT 9312).